We begin with the raw amino-acid sequence, 514 residues long: 2,3-bisphosphoglycerate-independent phosphoglycerate mutase (514 aa).

Asp-14 and Ser-64 together coordinate Mn(2+). The active-site Phosphoserine intermediate is the Ser-64. Substrate is bound by residues His-125, 155 to 156 (RD), Arg-187, Arg-193, 263 to 266 (RADR), and Lys-337. Residues Asp-404, His-408, Asp-445, His-446, and His-464 each coordinate Mn(2+).

The protein belongs to the BPG-independent phosphoglycerate mutase family. Monomer. Requires Mn(2+) as cofactor.

The enzyme catalyses (2R)-2-phosphoglycerate = (2R)-3-phosphoglycerate. It participates in carbohydrate degradation; glycolysis; pyruvate from D-glyceraldehyde 3-phosphate: step 3/5. Catalyzes the interconversion of 2-phosphoglycerate and 3-phosphoglycerate. The protein is 2,3-bisphosphoglycerate-independent phosphoglycerate mutase of Pseudoalteromonas translucida (strain TAC 125).